The sequence spans 431 residues: Enolase (431 aa).

A (2R)-2-phosphoglycerate-binding site is contributed by Gln-166. Glu-208 serves as the catalytic Proton donor. The Mg(2+) site is built by Asp-245, Glu-288, and Asp-315. Residues Lys-340, Arg-369, Ser-370, and Lys-391 each contribute to the (2R)-2-phosphoglycerate site. Lys-340 functions as the Proton acceptor in the catalytic mechanism.

Belongs to the enolase family. Mg(2+) serves as cofactor.

Its subcellular location is the cytoplasm. The protein localises to the secreted. It localises to the cell surface. It carries out the reaction (2R)-2-phosphoglycerate = phosphoenolpyruvate + H2O. Its pathway is carbohydrate degradation; glycolysis; pyruvate from D-glyceraldehyde 3-phosphate: step 4/5. In terms of biological role, catalyzes the reversible conversion of 2-phosphoglycerate (2-PG) into phosphoenolpyruvate (PEP). It is essential for the degradation of carbohydrates via glycolysis. This Clostridium botulinum (strain ATCC 19397 / Type A) protein is Enolase.